We begin with the raw amino-acid sequence, 2243 residues long: Zinc finger FYVE domain-containing protein 26 homolog (2243 aa).

Disordered stretches follow at residues 386–416 and 514–556; these read SQRKGEDGENDEEDDEQYVDDDVASPPRPTA and KKKA…GKAS. Acidic residues predominate over residues 393 to 408; that stretch reads GENDEEDDEQYVDDDV. Tyr403 is modified (phosphotyrosine). Positions 517 to 528 are enriched in basic and acidic residues; the sequence is ASSDDESRERSN. Basic residues predominate over residues 534 to 543; the sequence is NRRKARRQRR. The LRR 1 repeat unit spans residues 617 to 644; the sequence is KKIIETFHLEHSQLNRELHFMEQQQLVK. A Phosphoserine modification is found at Ser1424. The segment at 1444 to 1500 adopts an FYVE-type zinc-finger fold; it reads DEEASHCMCCRRAAFTMLMRRHHCRRCGRVVCYACSTHRIRIPELYDELEVRICNDC. Zn(2+) is bound by residues Cys1450, Cys1453, Cys1467, Cys1470, Cys1475, Cys1478, Cys1497, and Cys1500. Residues 1505-1534 form a disordered region; sequence TPAKDQGDGTSSERSAISGQVSKSSGRSDS. Residues 1512–1534 show a composition bias toward polar residues; sequence DGTSSERSAISGQVSKSSGRSDS. One copy of the LRR 2 repeat lies at 1887-1912; sequence YPQLANGGLNVLMDELQQLDDAQFTA.

This sequence belongs to the ZFYVE26 family.

Its function is as follows. Phosphatidylinositol 3-phosphate (PtdIns[3]P)-binding protein. Involved in autophagy. The chain is Zinc finger FYVE domain-containing protein 26 homolog from Drosophila melanogaster (Fruit fly).